Here is a 481-residue protein sequence, read N- to C-terminus: Argininosuccinate lyase (481 aa).

The protein belongs to the lyase 1 family. Argininosuccinate lyase subfamily.

Its subcellular location is the cytoplasm. It catalyses the reaction 2-(N(omega)-L-arginino)succinate = fumarate + L-arginine. The protein operates within amino-acid biosynthesis; L-arginine biosynthesis; L-arginine from L-ornithine and carbamoyl phosphate: step 3/3. In Kineococcus radiotolerans (strain ATCC BAA-149 / DSM 14245 / SRS30216), this protein is Argininosuccinate lyase.